A 322-amino-acid chain; its full sequence is GRB2-related adaptor protein 2 (322 aa).

One can recognise an SH3 1 domain in the interval 1–56 (MEATAKFDFMASGEDELSFRTGDILKILSNQEEWLKAELGSQEGYVPKNFIDIEFP). Position 45 is a phosphotyrosine (Y45). An SH2 domain is found at 58 to 149 (WFHEGLSRHQ…QKQVFLRDGT (92 aa)). Position 106 is an N6-acetyllysine (K106). The tract at residues 143-216 (VFLRDGTQDQ…TPGPQPPQQQ (74 aa)) is disordered. Residues 148 to 163 (GTQDQGHRGNSLDRRS) show a composition bias toward basic and acidic residues. S186 carries the phosphoserine modification. Positions 193–204 (PQQFHPHQQPSP) are enriched in low complexity. At S230 the chain carries Phosphoserine. T254 is subject to Phosphothreonine. The SH3 2 domain occupies 263-322 (GRVRWARALYDFEALEEDELGFRSGEVVEVLDSSNPSWWTGRLHNKLGLFPANYVAPMMR).

This sequence belongs to the GRB2/sem-5/DRK family. Interacts with phosphorylated LAT and LAX1 upon TCR activation. Interacts with SHB. Interacts with PTPN23. Interacts with phosphorylated LIME1 upon TCR activation.

The protein resides in the nucleus. It is found in the cytoplasm. The protein localises to the endosome. In terms of biological role, interacts with SLP-76 to regulate NF-AT activation. Binds to tyrosine-phosphorylated shc. The sequence is that of GRB2-related adaptor protein 2 (Grap2) from Mus musculus (Mouse).